A 444-amino-acid chain; its full sequence is Probable glycine dehydrogenase (decarboxylating) subunit 1 (444 aa).

Belongs to the GcvP family. N-terminal subunit subfamily. The glycine cleavage system is composed of four proteins: P, T, L and H. In this organism, the P 'protein' is a heterodimer of two subunits.

It carries out the reaction N(6)-[(R)-lipoyl]-L-lysyl-[glycine-cleavage complex H protein] + glycine + H(+) = N(6)-[(R)-S(8)-aminomethyldihydrolipoyl]-L-lysyl-[glycine-cleavage complex H protein] + CO2. The glycine cleavage system catalyzes the degradation of glycine. The P protein binds the alpha-amino group of glycine through its pyridoxal phosphate cofactor; CO(2) is released and the remaining methylamine moiety is then transferred to the lipoamide cofactor of the H protein. The protein is Probable glycine dehydrogenase (decarboxylating) subunit 1 of Carboxydothermus hydrogenoformans (strain ATCC BAA-161 / DSM 6008 / Z-2901).